A 343-amino-acid polypeptide reads, in one-letter code: Anthranilate phosphoribosyltransferase (343 aa).

5-phospho-alpha-D-ribose 1-diphosphate is bound by residues Gly84, Gly87–Asp88, Thr92, Asn94–Thr97, Lys112–Ser120, and Ser124. An anthranilate-binding site is contributed by Gly84. Residue Ser96 participates in Mg(2+) binding. Asn115 is an anthranilate binding site. Arg170 contributes to the anthranilate binding site. Mg(2+)-binding residues include Asp229 and Glu230.

It belongs to the anthranilate phosphoribosyltransferase family. Homodimer. Mg(2+) serves as cofactor.

It carries out the reaction N-(5-phospho-beta-D-ribosyl)anthranilate + diphosphate = 5-phospho-alpha-D-ribose 1-diphosphate + anthranilate. The protein operates within amino-acid biosynthesis; L-tryptophan biosynthesis; L-tryptophan from chorismate: step 2/5. Functionally, catalyzes the transfer of the phosphoribosyl group of 5-phosphorylribose-1-pyrophosphate (PRPP) to anthranilate to yield N-(5'-phosphoribosyl)-anthranilate (PRA). The chain is Anthranilate phosphoribosyltransferase from Burkholderia multivorans (strain ATCC 17616 / 249).